The sequence spans 581 residues: Myoneurin (581 aa).

One can recognise a BTB domain in the interval 24-89; that stretch reads CDCTIVIGEF…IYTGTLNLDS (66 aa). The tract at residues 167-193 is disordered; it reads PKQGALAKKSSQTKKKKKAFNSQKTGQ. Short sequence motifs (nuclear localization signal) lie at residues 174 to 190 and 256 to 261; these read KKSSQTKKKKKAFNSQK and KRKRGK. Ser-288 bears the Phosphoserine mark. C2H2-type zinc fingers lie at residues 301-323, 329-351, 357-380, 386-408, 414-436, 442-464, and 470-493; these read PMCNTCGKVFSEASSLRRHMRIH, YVCHLCGKAFTQCNQLKTHVRTH, YKCELCDKGFAQKCQLVFHSRMHH, YKCDVCNLQFATSSNLKIHARKH, YVCDRCGQRFAQASTLTYHVRRH, YVCDTCGKAFAVSSSLITHSRKH, and FICELCGNSYTDIKNLKKHKTKVH.

Belongs to the krueppel C2H2-type zinc-finger protein family.

Its subcellular location is the nucleus. The polypeptide is Myoneurin (MYNN) (Bos taurus (Bovine)).